Reading from the N-terminus, the 97-residue chain is Citrate lyase acyl carrier protein (97 aa).

An O-(phosphoribosyl dephospho-coenzyme A)serine modification is found at S14.

Belongs to the CitD family. As to quaternary structure, oligomer with a subunit composition of (alpha,beta,gamma)6.

The protein resides in the cytoplasm. Covalent carrier of the coenzyme of citrate lyase. In Yersinia enterocolitica serotype O:8 / biotype 1B (strain NCTC 13174 / 8081), this protein is Citrate lyase acyl carrier protein.